A 436-amino-acid chain; its full sequence is Methylenetetrahydrofolate--tRNA-(uracil-5-)-methyltransferase TrmFO (436 aa).

Glycine 9–glycine 14 is an FAD binding site.

This sequence belongs to the MnmG family. TrmFO subfamily. It depends on FAD as a cofactor.

The protein localises to the cytoplasm. It catalyses the reaction uridine(54) in tRNA + (6R)-5,10-methylene-5,6,7,8-tetrahydrofolate + NADH + H(+) = 5-methyluridine(54) in tRNA + (6S)-5,6,7,8-tetrahydrofolate + NAD(+). The enzyme catalyses uridine(54) in tRNA + (6R)-5,10-methylene-5,6,7,8-tetrahydrofolate + NADPH + H(+) = 5-methyluridine(54) in tRNA + (6S)-5,6,7,8-tetrahydrofolate + NADP(+). Catalyzes the folate-dependent formation of 5-methyl-uridine at position 54 (M-5-U54) in all tRNAs. The sequence is that of Methylenetetrahydrofolate--tRNA-(uracil-5-)-methyltransferase TrmFO from Ligilactobacillus salivarius (strain UCC118) (Lactobacillus salivarius).